Here is a 205-residue protein sequence, read N- to C-terminus: Protein N-terminal glutamine amidohydrolase (205 aa).

Catalysis depends on residues Cys-28, His-81, and Asp-97.

This sequence belongs to the NTAQ1 family. Monomer.

The protein localises to the cytoplasm. Its subcellular location is the cytosol. It localises to the nucleus. It carries out the reaction N-terminal L-glutaminyl-[protein] + H2O = N-terminal L-glutamyl-[protein] + NH4(+). Functionally, mediates the side-chain deamidation of N-terminal glutamine residues to glutamate, an important step in N-end rule pathway of protein degradation. Conversion of the resulting N-terminal glutamine to glutamate renders the protein susceptible to arginylation, polyubiquitination and degradation as specified by the N-end rule. Does not act on substrates with internal or C-terminal glutamine and does not act on non-glutamine residues in any position. Does not deaminate acetylated N-terminal glutamine. With the exception of proline, all tested second-position residues on substrate peptides do not greatly influence the activity. In contrast, a proline at position 2, virtually abolishes deamidation of N-terminal glutamine. In Homo sapiens (Human), this protein is Protein N-terminal glutamine amidohydrolase.